An 87-amino-acid polypeptide reads, in one-letter code: UPF0473 protein Daud_0916 (87 aa).

The protein belongs to the UPF0473 family.

This is UPF0473 protein Daud_0916 from Desulforudis audaxviator (strain MP104C).